A 187-amino-acid chain; its full sequence is Putative carbonic anhydrase YtiB (187 aa).

4 residues coordinate Zn(2+): cysteine 38, aspartate 40, histidine 96, and cysteine 99.

It belongs to the beta-class carbonic anhydrase family. Zn(2+) is required as a cofactor.

It carries out the reaction hydrogencarbonate + H(+) = CO2 + H2O. Reversible hydration of carbon dioxide. The chain is Putative carbonic anhydrase YtiB (ytiB) from Bacillus subtilis (strain 168).